A 334-amino-acid chain; its full sequence is o-succinylbenzoate synthase (334 aa).

K107 serves as the catalytic Proton donor. Mg(2+) contacts are provided by D135, E162, and D185. Catalysis depends on K209, which acts as the Proton acceptor.

This sequence belongs to the mandelate racemase/muconate lactonizing enzyme family. MenC type 1 subfamily. A divalent metal cation serves as cofactor.

The enzyme catalyses (1R,6R)-6-hydroxy-2-succinyl-cyclohexa-2,4-diene-1-carboxylate = 2-succinylbenzoate + H2O. The protein operates within quinol/quinone metabolism; 1,4-dihydroxy-2-naphthoate biosynthesis; 1,4-dihydroxy-2-naphthoate from chorismate: step 4/7. Its pathway is quinol/quinone metabolism; menaquinone biosynthesis. Its function is as follows. Converts 2-succinyl-6-hydroxy-2,4-cyclohexadiene-1-carboxylate (SHCHC) to 2-succinylbenzoate (OSB). This chain is o-succinylbenzoate synthase, found in Mycobacterium leprae (strain TN).